We begin with the raw amino-acid sequence, 146 residues long: Anti-sigma F factor (146 aa).

It belongs to the anti-sigma-factor family.

The catalysed reaction is L-seryl-[protein] + ATP = O-phospho-L-seryl-[protein] + ADP + H(+). It carries out the reaction L-threonyl-[protein] + ATP = O-phospho-L-threonyl-[protein] + ADP + H(+). Binds to sigma F and blocks its ability to form an RNA polymerase holoenzyme (E-sigma F). Phosphorylates SpoIIAA on a serine residue. This phosphorylation may enable SpoIIAA to act as an anti-anti-sigma factor that counteracts SpoIIAB and thus releases sigma F from inhibition. The protein is Anti-sigma F factor of Geobacillus thermodenitrificans (strain NG80-2).